A 25-amino-acid chain; its full sequence is Cysteine protease inhibitor 2 (25 aa).

The protein belongs to the protease inhibitor I3 (leguminous Kunitz-type inhibitor) family. In terms of tissue distribution, cortex of tuber.

Inhibitor of subtilisin. Inhibits moderately trypsin and chymotrypsin (serine proteases). May protect the plant by inhibiting proteases of invading organisms. This chain is Cysteine protease inhibitor 2, found in Solanum tuberosum (Potato).